A 115-amino-acid chain; its full sequence is MSDEYDAELDELLRRKALEQQRKALEEQQRKAELEAKKDAILRVILTPEARQRLANVKLVKPELAEAIENQLIALAQSGRIQAPITDEELKEILAQLTNQTRKDYKITIRERGWK.

Belongs to the PDCD5 family.

The polypeptide is DNA-binding protein STK_13740 (Sulfurisphaera tokodaii (strain DSM 16993 / JCM 10545 / NBRC 100140 / 7) (Sulfolobus tokodaii)).